The chain runs to 189 residues: Orotate phosphoribosyltransferase (189 aa).

5-phospho-alpha-D-ribose 1-diphosphate contacts are provided by residues Arg99, Lys100, Lys103, His105, and 126-134 (EDVITTGGS). Orotate is bound by residues Thr130 and Arg158.

Belongs to the purine/pyrimidine phosphoribosyltransferase family. PyrE subfamily. As to quaternary structure, homodimer. Mg(2+) is required as a cofactor.

It carries out the reaction orotidine 5'-phosphate + diphosphate = orotate + 5-phospho-alpha-D-ribose 1-diphosphate. It participates in pyrimidine metabolism; UMP biosynthesis via de novo pathway; UMP from orotate: step 1/2. Catalyzes the transfer of a ribosyl phosphate group from 5-phosphoribose 1-diphosphate to orotate, leading to the formation of orotidine monophosphate (OMP). The sequence is that of Orotate phosphoribosyltransferase from Thermosynechococcus vestitus (strain NIES-2133 / IAM M-273 / BP-1).